The sequence spans 149 residues: MERTFLAVKPDGVQRGLVGEIISRYEAKGFTLVGLKLMVVSRELAEQHYGEHKEKPFFSGLVDFITSGPVVAMVWEGKGVVAAARKIIGATNPLGSEPGTIRGDFGIDIGRNIIHGSDAVETAQREISLWFKSEELADWSPTLTSWIYE.

ATP is bound by residues K9, F57, R85, T91, R102, and N112. H115 serves as the catalytic Pros-phosphohistidine intermediate.

The protein belongs to the NDK family. In terms of assembly, homotetramer. It depends on Mg(2+) as a cofactor.

It localises to the cytoplasm. It catalyses the reaction a 2'-deoxyribonucleoside 5'-diphosphate + ATP = a 2'-deoxyribonucleoside 5'-triphosphate + ADP. The enzyme catalyses a ribonucleoside 5'-diphosphate + ATP = a ribonucleoside 5'-triphosphate + ADP. Its function is as follows. Major role in the synthesis of nucleoside triphosphates other than ATP. The ATP gamma phosphate is transferred to the NDP beta phosphate via a ping-pong mechanism, using a phosphorylated active-site intermediate. The chain is Nucleoside diphosphate kinase from Acaryochloris marina (strain MBIC 11017).